We begin with the raw amino-acid sequence, 402 residues long: tRNA(Met) cytidine acetate ligase (402 aa).

ATP is bound by residues I7 to H20, G102, N171, and R196.

Belongs to the TmcAL family.

Its subcellular location is the cytoplasm. The enzyme catalyses cytidine(34) in elongator tRNA(Met) + acetate + ATP = N(4)-acetylcytidine(34) in elongator tRNA(Met) + AMP + diphosphate. In terms of biological role, catalyzes the formation of N(4)-acetylcytidine (ac(4)C) at the wobble position of elongator tRNA(Met), using acetate and ATP as substrates. First activates an acetate ion to form acetyladenylate (Ac-AMP) and then transfers the acetyl group to tRNA to form ac(4)C34. This is tRNA(Met) cytidine acetate ligase from Clostridium perfringens (strain ATCC 13124 / DSM 756 / JCM 1290 / NCIMB 6125 / NCTC 8237 / Type A).